The following is a 633-amino-acid chain: Chitin synthase regulatory factor 4 (633 aa).

The segment at 121–151 (ATSSQETKRDRPLPNIRNSAPSATRSHSTPC) is disordered. Over residues 136–149 (IRNSAPSATRSHST) the composition is skewed to polar residues. Serine 148 is modified (phosphoserine). Sel1-like repeat units lie at residues 278–314 (AKAM…NLGY), 315–346 (TRSL…SEND), 438–474 (SSAQ…KRGE), 475–511 (TEAD…MAGN), and 512–543 (ANAQ…KAGH). The interval 583–613 (ASETSPPHAPAVSSTPVTSAPPVSQTKVTKV) is disordered. Over residues 592-613 (PAVSSTPVTSAPPVSQTKVTKV) the composition is skewed to low complexity.

Its subcellular location is the cytoplasm. In terms of biological role, involved in septum formation. Required for the proper localization of chs2 at the septum. The sequence is that of Chitin synthase regulatory factor 4 (chr4) from Schizosaccharomyces pombe (strain 972 / ATCC 24843) (Fission yeast).